Reading from the N-terminus, the 149-residue chain is Large ribosomal subunit protein bL9 (149 aa).

This sequence belongs to the bacterial ribosomal protein bL9 family.

Its function is as follows. Binds to the 23S rRNA. This Geobacillus sp. (strain WCH70) protein is Large ribosomal subunit protein bL9.